The sequence spans 201 residues: Putative Ras-related protein Rab-1C (201 aa).

GTP is bound by residues 15–23 (GDSGVGKSC), 33–40 (YTESYIST), and 63–67 (DTAGQ). The short motif at 37–45 (YISTIGVDF) is the Effector region element. (Microbial infection) O-(2-cholinephosphoryl)serine is present on Ser-76. GTP is bound by residues 121–124 (NKSD) and 151–153 (SAK). Residues 174–201 (GPGAASGGERPNLKIDSTPVKPAGGGCC) form a disordered region. S-geranylgeranyl cysteine attachment occurs at residues Cys-200 and Cys-201.

The protein belongs to the small GTPase superfamily. Rab family. In terms of processing, (Microbial infection) Phosphocholinated at Ser-76 by L.pneumophila AnkX, leading to displace GDP dissociation inhibitors (GDI). Both GDP-bound and GTP-bound forms can be phosphocholinated. Dephosphocholinated by L.pneumophila Lem3, restoring accessibility to L.pneumophila GTPase effector LepB. Post-translationally, (Microbial infection) Glycosylated by S.typhimurium protein Ssek3: arginine GlcNAcylation prevents GTPase activity, thereby disrupting vesicular protein transport from the endoplasmic reticulum (ER) to the Golgi compartment.

The protein localises to the membrane. It is found in the cytoplasm. It carries out the reaction GTP + H2O = GDP + phosphate + H(+). Protein transport. Probably involved in vesicular traffic. The polypeptide is Putative Ras-related protein Rab-1C (RAB1C) (Homo sapiens (Human)).